The primary structure comprises 966 residues: Regulator of G-protein signaling 3 (966 aa).

The region spanning 18–95 (QITIRRGKDG…EIILLVWRVV (78 aa)) is the PDZ domain. The segment at 115–135 (THDLLSPPNKREKNCTHGAPV) is disordered. Arg167 carries the omega-N-methylarginine modification. Disordered regions lie at residues 403–618 (EADE…TGAV) and 637–704 (YSQL…RVQN). 2 stretches are compositionally biased toward polar residues: residues 527-548 (PETSTSKDSPPGQGSSPTTELP) and 576-594 (SSASVQKRLPSQESPSSLG). Over residues 649-675 (GEDEDAEEGEEGGEGEEDEEDDTSDDN) the composition is skewed to acidic residues. Over residues 676 to 686 (YGDRSEAKRSS) the composition is skewed to basic and acidic residues. 4 positions are modified to phosphoserine: Ser712, Ser715, Ser747, and Ser776. Residues 806–830 (FRRRNESPGAQPASKTDKTTKSFKP) form a disordered region. Over residues 820 to 830 (KTDKTTKSFKP) the composition is skewed to basic and acidic residues. Positions 841 to 966 (SLEKLLLHKY…INQKKMSPPL (126 aa)) constitute an RGS domain.

In terms of assembly, binds the GNB1-GNG2 heterodimer. Binds EFNB1 and EFNB2. Phosphorylated by cyclic GMP-dependent protein kinase. In terms of processing, ISGylated. As to expression, detected in embryos from E8.5-16.5 in cortical ventricular zone, dorsal root ganglia and cerebellar primordia. Isoform 3 is detected in testis and in spermatocytes from newborn mice. Levels increase and reach a maximum after 21 days; after this they decrease again. Long isoforms are widely expressed.

It localises to the cytoplasm. The protein resides in the cell membrane. It is found in the nucleus. Functionally, down-regulates signaling from heterotrimeric G-proteins by increasing the GTPase activity of the alpha subunits, thereby driving them into their inactive GDP-bound form. Down-regulates G-protein-mediated release of inositol phosphates and activation of MAP kinases. This is Regulator of G-protein signaling 3 (Rgs3) from Mus musculus (Mouse).